Reading from the N-terminus, the 119-residue chain is Large ribosomal subunit protein bL20 (119 aa).

The protein belongs to the bacterial ribosomal protein bL20 family.

Functionally, binds directly to 23S ribosomal RNA and is necessary for the in vitro assembly process of the 50S ribosomal subunit. It is not involved in the protein synthesizing functions of that subunit. In Laribacter hongkongensis (strain HLHK9), this protein is Large ribosomal subunit protein bL20.